Reading from the N-terminus, the 396-residue chain is Phosphoglycerate kinase (396 aa).

Substrate is bound by residues 21 to 23 (DFN), arginine 36, 59 to 62 (HFDR), arginine 118, and arginine 151. ATP is bound by residues lysine 201, glutamate 323, and 353–356 (GGDT).

It belongs to the phosphoglycerate kinase family. In terms of assembly, monomer.

Its subcellular location is the cytoplasm. The enzyme catalyses (2R)-3-phosphoglycerate + ATP = (2R)-3-phospho-glyceroyl phosphate + ADP. It functions in the pathway carbohydrate degradation; glycolysis; pyruvate from D-glyceraldehyde 3-phosphate: step 2/5. This chain is Phosphoglycerate kinase, found in Caulobacter vibrioides (strain ATCC 19089 / CIP 103742 / CB 15) (Caulobacter crescentus).